A 459-amino-acid chain; its full sequence is Zinc finger transcription factor lin-29 (459 aa).

Residues 1–14 (MDQTVLDSAFNSPV) show a composition bias toward polar residues. The tract at residues 1 to 73 (MDQTVLDSAF…GSTGSTPAHH (73 aa)) is disordered. The segment covering 16-56 (SGIAGTTTGSGSTTHFGVGTNFKVSVRSSSRSTDGTDSTDG) has biased composition (low complexity). A compositionally biased stretch (polar residues) spans 57–73 (ANSDNVTGSTGSTPAHH). 5 consecutive C2H2-type zinc fingers follow at residues 151 to 173 (YKCT…MRIH), 180 to 202 (GPCN…IRTH), 208 to 232 (YKCK…SRCH), 238 to 260 (FKCN…IPKH), and 269 to 291 (HICP…MTKH). An interacts with mab-10 region spans residues 390 to 406 (PGFNMITPLENIQRYNG). Over residues 423-444 (VSSTPSSTSSSSAGSSSSQGGV) the composition is skewed to low complexity. A disordered region spans residues 423–459 (VSSTPSSTSSSSAGSSSSQGGVFNPQSLINNMKNHSY). Residues 446 to 459 (NPQSLINNMKNHSY) show a composition bias toward polar residues.

As to quaternary structure, interacts (via C-terminus) with transcription cofactor mab-10. As to expression, expressed in lateral hypodermal seam cells (at protein level).

Its subcellular location is the nucleus. In terms of biological role, transcription factor which regulates the expression of various genes, including those involved in cuticle synthesis and maintenance, such as collagens, and in lipid metabolism. Binds to promoter regions of genes, at 5'-[(T/G)TTTTTT(A/T/C/G)]-3' consensus sequences. Heterochronic protein which controls the choice of stage specific cell fates, including at the juvenile to adult transition. Promotes differentiation, together with transcriptional cofactor mab-10, perhaps as part of a transcriptional complex. Required for vulval morphogenesis and egg laying; perhaps by acting in a subset of the lateral seam cells. Involved in the exit of seam cells from the cell cycle. Required for specification of uterine pi-cell fate, acting upstream of lin-12 Notch signaling, perhaps via maintenance of lag-2 expression in the anchor cell (AC). Involved in morphogenesis of the specialized male tail used in mating. Acts cell non-autonomously from the hypodermis to regulate expression of genes in the intestine, including genes involved in lipid metabolism. May regulate vitellogenesis via the mTORC2 signaling mediated pathway, independently of daf-16. May promote nuclear accumulation of mab-10 in seam cells post-transcriptionally. Dispensable for seam cell fusion. Required for seam cell fusion. The polypeptide is Zinc finger transcription factor lin-29 (Caenorhabditis elegans).